The primary structure comprises 90 residues: Small ribosomal subunit protein bS16 (90 aa).

Belongs to the bacterial ribosomal protein bS16 family.

This chain is Small ribosomal subunit protein bS16, found in Geobacillus thermodenitrificans (strain NG80-2).